The following is a 488-amino-acid chain: Inosine-5'-monophosphate dehydrogenase (488 aa).

CBS domains are found at residues Val95 to Ile153 and Met157 to Glu216. Residues Asp250 and Gly300–Gly302 contribute to the NAD(+) site. The K(+) site is built by Gly302 and Gly304. Residue Ser305 coordinates IMP. K(+) is bound at residue Cys307. Cys307 (thioimidate intermediate) is an active-site residue. Residues Asp340–Gly342, Gly363–Ser364, and Tyr387–Gly391 contribute to the IMP site. Catalysis depends on Arg403, which acts as the Proton acceptor. Position 417 (Glu417) interacts with IMP. The disordered stretch occupies residues Ala467–Phe488. Glu471, Ser472, and His473 together coordinate K(+).

The protein belongs to the IMPDH/GMPR family. As to quaternary structure, homotetramer. Requires K(+) as cofactor.

The catalysed reaction is IMP + NAD(+) + H2O = XMP + NADH + H(+). The protein operates within purine metabolism; XMP biosynthesis via de novo pathway; XMP from IMP: step 1/1. Mycophenolic acid (MPA) is a non-competitive inhibitor that prevents formation of the closed enzyme conformation by binding to the same site as the amobile flap. In contrast, mizoribine monophosphate (MZP) is a competitive inhibitor that induces the closed conformation. MPA is a potent inhibitor of mammalian IMPDHs but a poor inhibitor of the bacterial enzymes. MZP is a more potent inhibitor of bacterial IMPDH. Functionally, catalyzes the conversion of inosine 5'-phosphate (IMP) to xanthosine 5'-phosphate (XMP), the first committed and rate-limiting step in the de novo synthesis of guanine nucleotides, and therefore plays an important role in the regulation of cell growth. The polypeptide is Inosine-5'-monophosphate dehydrogenase (Staphylococcus saprophyticus subsp. saprophyticus (strain ATCC 15305 / DSM 20229 / NCIMB 8711 / NCTC 7292 / S-41)).